Reading from the N-terminus, the 66-residue chain is Sodium/potassium-transporting ATPase subunit gamma (66 aa).

A helical transmembrane segment spans residues glycine 29–leucine 46.

The protein belongs to the FXYD family. In terms of assembly, regulatory subunit of the sodium/potassium-transporting ATPase which is composed of a catalytic alpha subunit, an auxiliary non-catalytic beta subunit and an additional regulatory subunit. Expressed in the distal convoluted tubule in the kidney. Found on basolateral membranes of nephron epithelial cells.

It is found in the membrane. Functionally, may be involved in forming the receptor site for cardiac glycoside binding or may modulate the transport function of the sodium ATPase. This is Sodium/potassium-transporting ATPase subunit gamma (FXYD2) from Homo sapiens (Human).